The primary structure comprises 120 residues: Ribonuclease P protein component 2 (120 aa).

It belongs to the eukaryotic/archaeal RNase P protein component 2 family. In terms of assembly, consists of a catalytic RNA component and at least 4-5 protein subunits.

The protein localises to the cytoplasm. It catalyses the reaction Endonucleolytic cleavage of RNA, removing 5'-extranucleotides from tRNA precursor.. Functionally, part of ribonuclease P, a protein complex that generates mature tRNA molecules by cleaving their 5'-ends. This chain is Ribonuclease P protein component 2, found in Thermococcus gammatolerans (strain DSM 15229 / JCM 11827 / EJ3).